A 93-amino-acid polypeptide reads, in one-letter code: ATP synthase subunit c (93 aa).

2 helical membrane passes run 13 to 33 (AIGV…GMGI) and 58 to 78 (ISLA…FILL).

It belongs to the ATPase C chain family. F-type ATPases have 2 components, F(1) - the catalytic core - and F(0) - the membrane proton channel. F(1) has five subunits: alpha(3), beta(3), gamma(1), delta(1), epsilon(1). F(0) has three main subunits: a(1), b(2) and c(10-14). The alpha and beta chains form an alternating ring which encloses part of the gamma chain. F(1) is attached to F(0) by a central stalk formed by the gamma and epsilon chains, while a peripheral stalk is formed by the delta and b chains.

It localises to the cell inner membrane. F(1)F(0) ATP synthase produces ATP from ADP in the presence of a proton or sodium gradient. F-type ATPases consist of two structural domains, F(1) containing the extramembraneous catalytic core and F(0) containing the membrane proton channel, linked together by a central stalk and a peripheral stalk. During catalysis, ATP synthesis in the catalytic domain of F(1) is coupled via a rotary mechanism of the central stalk subunits to proton translocation. Functionally, key component of the F(0) channel; it plays a direct role in translocation across the membrane. A homomeric c-ring of between 10-14 subunits forms the central stalk rotor element with the F(1) delta and epsilon subunits. In Campylobacter hominis (strain ATCC BAA-381 / DSM 21671 / CCUG 45161 / LMG 19568 / NCTC 13146 / CH001A), this protein is ATP synthase subunit c.